We begin with the raw amino-acid sequence, 381 residues long: Chaperone protein DnaJ (381 aa).

Residues 5–70 form the J domain; that stretch reads DYYEVLGIER…EKRSAYDQFG (66 aa). Residues 137-215 form a CR-type zinc finger; it reads GTTVDIRVPR…CHGEGRVRET (79 aa). Cys150, Cys153, Cys167, Cys170, Cys189, Cys192, Cys203, and Cys206 together coordinate Zn(2+). CXXCXGXG motif repeat units lie at residues 150–157, 167–174, 189–196, and 203–210; these read CEHCDGDG, CPTCHGQG, CPTCHGAG, and CRKCHGEG.

It belongs to the DnaJ family. As to quaternary structure, homodimer. The cofactor is Zn(2+).

It is found in the cytoplasm. Participates actively in the response to hyperosmotic and heat shock by preventing the aggregation of stress-denatured proteins and by disaggregating proteins, also in an autonomous, DnaK-independent fashion. Unfolded proteins bind initially to DnaJ; upon interaction with the DnaJ-bound protein, DnaK hydrolyzes its bound ATP, resulting in the formation of a stable complex. GrpE releases ADP from DnaK; ATP binding to DnaK triggers the release of the substrate protein, thus completing the reaction cycle. Several rounds of ATP-dependent interactions between DnaJ, DnaK and GrpE are required for fully efficient folding. Also involved, together with DnaK and GrpE, in the DNA replication of plasmids through activation of initiation proteins. In Chromohalobacter salexigens (strain ATCC BAA-138 / DSM 3043 / CIP 106854 / NCIMB 13768 / 1H11), this protein is Chaperone protein DnaJ.